The following is a 651-amino-acid chain: Coiled-coil domain-containing protein 81 (651 aa).

The disordered stretch occupies residues 194 to 314 (LSSRESFGKR…PKTSPAPACQ (121 aa)). Serine 206 carries the phosphoserine modification. Composition is skewed to basic and acidic residues over residues 212 to 222 (RIEHKETENKP) and 232 to 250 (GENR…KEEG). Positions 265–275 (SISPAKVTSGS) are enriched in polar residues. Phosphoserine occurs at positions 273, 275, 294, and 416. 2 coiled-coil regions span residues 428–465 (SQSL…EELA) and 539–566 (KRNT…EHLA).

The protein localises to the cytoplasm. The protein resides in the cytoskeleton. It is found in the microtubule organizing center. It localises to the centrosome. This chain is Coiled-coil domain-containing protein 81 (Ccdc81), found in Rattus norvegicus (Rat).